Here is a 309-residue protein sequence, read N- to C-terminus: Acetylglutamate kinase (309 aa).

Substrate is bound by residues 69 to 70 (GG), arginine 91, and asparagine 194.

This sequence belongs to the acetylglutamate kinase family. ArgB subfamily.

It is found in the cytoplasm. It carries out the reaction N-acetyl-L-glutamate + ATP = N-acetyl-L-glutamyl 5-phosphate + ADP. It participates in amino-acid biosynthesis; L-arginine biosynthesis; N(2)-acetyl-L-ornithine from L-glutamate: step 2/4. Its function is as follows. Catalyzes the ATP-dependent phosphorylation of N-acetyl-L-glutamate. This chain is Acetylglutamate kinase, found in Vesicomyosocius okutanii subsp. Calyptogena okutanii (strain HA).